The following is a 318-amino-acid chain: MVKVYIAGPIPEVGLNLLKDQGFEVDMYEGTGIIDKETLKQGVKDADALISLLSTSVDKEVIDAANNLKIITNYGAGFNNVDIDYARQQNIDVTNTPKASTNSTAELTFALVLAVARRIPEGDKLCRTTGFDGWAPLFFRGREVSGKTIGIIGLGEIGSAVARRAKAFDMNILYTGPHQKVDKEREIGAKYVDLETLLKNADFVTINAAYNPSLHHQIDKAQFEMMKPTSYLINASRGPIVHEKALVQALKDKEIEGAALDVFEFEPEINDELKTLDNVVITPHIGNATFESRDMMSKIVANDTISKLNNDQPKFIVN.

NAD(+)-binding positions include 156–157 (EI), 235–237 (ASR), and Asp261. Arg237 is an active-site residue. The active site involves Glu266. Catalysis depends on His284, which acts as the Proton donor. Residue 284-287 (HIGN) coordinates NAD(+).

Belongs to the D-isomer specific 2-hydroxyacid dehydrogenase family.

The protein is Putative 2-hydroxyacid dehydrogenase SSP0606 of Staphylococcus saprophyticus subsp. saprophyticus (strain ATCC 15305 / DSM 20229 / NCIMB 8711 / NCTC 7292 / S-41).